The primary structure comprises 369 residues: GTPase Obg (369 aa).

Residues 1 to 158 (MFTDVVELTV…RRIKLDLKLI (158 aa)) enclose the Obg domain. The segment at 126–146 (NTHFKSSTNQRPTYAQPGEKG) is disordered. The segment covering 128-138 (HFKSSTNQRPT) has biased composition (polar residues). Positions 159–362 (ADVGLVGFPN…LKHALFNLVQ (204 aa)) constitute an OBG-type G domain. GTP contacts are provided by residues 165–172 (GFPNVGKS), 190–194 (FTTLT), 212–215 (DIPG), 280–283 (TRAD), and 343–345 (SSA). Mg(2+)-binding residues include Ser172 and Thr192.

It belongs to the TRAFAC class OBG-HflX-like GTPase superfamily. OBG GTPase family. In terms of assembly, monomer. It depends on Mg(2+) as a cofactor.

The protein resides in the cytoplasm. Its function is as follows. An essential GTPase which binds GTP, GDP and possibly (p)ppGpp with moderate affinity, with high nucleotide exchange rates and a fairly low GTP hydrolysis rate. Plays a role in control of the cell cycle, stress response, ribosome biogenesis and in those bacteria that undergo differentiation, in morphogenesis control. The chain is GTPase Obg from Sulfurimonas denitrificans (strain ATCC 33889 / DSM 1251) (Thiomicrospira denitrificans (strain ATCC 33889 / DSM 1251)).